Here is a 280-residue protein sequence, read N- to C-terminus: Shikimate dehydrogenase (NADP(+)) (280 aa).

Shikimate is bound by residues 15–17 and threonine 62; that span reads SLS. Lysine 66 (proton acceptor) is an active-site residue. Shikimate is bound by residues asparagine 88 and aspartate 104. NADP(+) contacts are provided by residues 128 to 132, 151 to 156, and isoleucine 222; these read GAGGA and NRTEER. Residue tyrosine 224 coordinates shikimate. An NADP(+)-binding site is contributed by glycine 245.

This sequence belongs to the shikimate dehydrogenase family. As to quaternary structure, homodimer.

The catalysed reaction is shikimate + NADP(+) = 3-dehydroshikimate + NADPH + H(+). The protein operates within metabolic intermediate biosynthesis; chorismate biosynthesis; chorismate from D-erythrose 4-phosphate and phosphoenolpyruvate: step 4/7. In terms of biological role, involved in the biosynthesis of the chorismate, which leads to the biosynthesis of aromatic amino acids. Catalyzes the reversible NADPH linked reduction of 3-dehydroshikimate (DHSA) to yield shikimate (SA). The sequence is that of Shikimate dehydrogenase (NADP(+)) from Methanosarcina acetivorans (strain ATCC 35395 / DSM 2834 / JCM 12185 / C2A).